We begin with the raw amino-acid sequence, 79 residues long: Cytochrome c-551 (79 aa).

The segment covering 1-14 (DGQSIYESGTSPTC) has biased composition (polar residues). The tract at residues 1–35 (DGQSIYESGTSPTCASCHDRGTAGAPKINEPGDWD) is disordered. Heme c is bound by residues Cys14, Cys17, His18, and Met55.

Binds 1 heme c group covalently per subunit.

This Halorhodospira halochloris (Ectothiorhodospira halochloris) protein is Cytochrome c-551.